Here is a 77-residue protein sequence, read N- to C-terminus: Conotoxin VnMEKL-0111 (77 aa).

An N-terminal signal peptide occupies residues 1-19; that stretch reads MEKLTILLLVAAVLMSTQA. Residues 20–46 constitute a propeptide that is removed on maturation; sequence LIQHDGEKSQKAKMKFLTARTLSAKTR. 3 disulfides stabilise this stretch: cysteine 50/cysteine 66, cysteine 57/cysteine 71, and cysteine 65/cysteine 75.

The protein belongs to the conotoxin O2 superfamily. In terms of tissue distribution, expressed by the venom duct.

It localises to the secreted. The sequence is that of Conotoxin VnMEKL-0111 from Conus ventricosus (Mediterranean cone).